Consider the following 74-residue polypeptide: Translation initiation factor IF-1 (74 aa).

Residues 1-72 (MGKEDVIRME…TRGRIVYRKK (72 aa)) form the S1-like domain.

Belongs to the IF-1 family. As to quaternary structure, component of the 30S ribosomal translation pre-initiation complex which assembles on the 30S ribosome in the order IF-2 and IF-3, IF-1 and N-formylmethionyl-tRNA(fMet); mRNA recruitment can occur at any time during PIC assembly.

It is found in the cytoplasm. Functionally, one of the essential components for the initiation of protein synthesis. Stabilizes the binding of IF-2 and IF-3 on the 30S subunit to which N-formylmethionyl-tRNA(fMet) subsequently binds. Helps modulate mRNA selection, yielding the 30S pre-initiation complex (PIC). Upon addition of the 50S ribosomal subunit IF-1, IF-2 and IF-3 are released leaving the mature 70S translation initiation complex. This Thermotoga petrophila (strain ATCC BAA-488 / DSM 13995 / JCM 10881 / RKU-1) protein is Translation initiation factor IF-1.